The chain runs to 650 residues: Probable acyl-CoA dehydrogenase FadE10 (650 aa).

The disordered stretch occupies residues 1 to 23 (MAQQTQVTEEQARALAEESRESG). Basic and acidic residues predominate over residues 10–23 (EQARALAEESRESG). The Proton acceptor role is filled by glutamate 422.

Belongs to the acyl-CoA dehydrogenase family. The cofactor is FAD.

The catalysed reaction is a 2,3-saturated acyl-CoA + A = a 2,3-dehydroacyl-CoA + AH2. This chain is Probable acyl-CoA dehydrogenase FadE10 (fadE10), found in Mycobacterium tuberculosis (strain CDC 1551 / Oshkosh).